Here is a 290-residue protein sequence, read N- to C-terminus: Glycine--tRNA ligase alpha subunit (290 aa).

Belongs to the class-II aminoacyl-tRNA synthetase family. As to quaternary structure, tetramer of two alpha and two beta subunits.

The protein localises to the cytoplasm. It catalyses the reaction tRNA(Gly) + glycine + ATP = glycyl-tRNA(Gly) + AMP + diphosphate. In Brachyspira hyodysenteriae (strain ATCC 49526 / WA1), this protein is Glycine--tRNA ligase alpha subunit.